We begin with the raw amino-acid sequence, 116 residues long: Large ribosomal subunit protein bL19 (116 aa).

It belongs to the bacterial ribosomal protein bL19 family.

This protein is located at the 30S-50S ribosomal subunit interface and may play a role in the structure and function of the aminoacyl-tRNA binding site. The sequence is that of Large ribosomal subunit protein bL19 from Clostridium botulinum (strain Eklund 17B / Type B).